The following is a 416-amino-acid chain: Enterobactin exporter EntS (416 aa).

Over 1–21 (MNKQSWLLNLSLLKTHPAFRA) the chain is Cytoplasmic. The chain crosses the membrane as a helical span at residues 22 to 42 (VFLARFISIVSLGLLGVAVPV). At 43–55 (QIQIMTHSTWQVG) the chain is on the periplasmic side. Residues 56–76 (LSVTLTGGAMFVGLMVGGVLA) form a helical membrane-spanning segment. At 77-83 (DRYERKK) the chain is on the cytoplasmic side. The helical transmembrane segment at 84–104 (VILLARGTCGIGFIGLCLNAL) threads the bilayer. Over 105–109 (LPEPS) the chain is Periplasmic. A helical membrane pass occupies residues 110–130 (LLAIYLLGLWDGFFASLGVTA). Over 131-156 (LLAATPALVGRENLMQAGAITMLTVR) the chain is Cytoplasmic. Residues 157–177 (LGSVISPMIGGLLLATGGVAW) traverse the membrane as a helical segment. Position 178 (N178) is a topological domain, periplasmic. A helical membrane pass occupies residues 179–199 (YGLAAAGTFITLLPLLSLPAL). Over 200 to 218 (PPPPQPREHPLKSLLAGFR) the chain is Cytoplasmic. Residues 219-239 (FLLASPLVGGIALLGGLLTMA) traverse the membrane as a helical segment. Over 240–256 (SAVRVLYPALADNWQMS) the chain is Periplasmic. Residues 257-277 (AAQIGFLYAAIPLGAAIGALT) traverse the membrane as a helical segment. The Cytoplasmic segment spans residues 278 to 287 (SGKLAHSVRP). Residues 288 to 307 (GLLMLLSTLGAFLAIGLFGL) traverse the membrane as a helical segment. Residues 308–313 (MPMWIL) lie on the Periplasmic side of the membrane. The helical transmembrane segment at 314–336 (GVVCLALFGWLSAVSSLLQYTML) threads the bilayer. The Cytoplasmic segment spans residues 337–356 (QTQTPEAMLGRINGLWTAQN). Residues 357 to 377 (VTGDAIGAALLGGLGAMMTPV) traverse the membrane as a helical segment. Residue A378 is a topological domain, periplasmic. Residues 379 to 399 (SASASGFGLLIIGVLLLLVLV) form a helical membrane-spanning segment. Topologically, residues 400-416 (ELRRFRQTPPQVTASDS) are cytoplasmic.

The protein belongs to the major facilitator superfamily. EntS (TC 2.A.1.38) family.

It is found in the cell inner membrane. Its function is as follows. Component of an export pathway for enterobactin. The polypeptide is Enterobactin exporter EntS (Escherichia coli O127:H6 (strain E2348/69 / EPEC)).